The following is a 1210-amino-acid chain: Epidermal growth factor receptor (1210 aa).

A signal peptide spans Met-1–Ala-24. Topologically, residues Leu-25–Ser-645 are extracellular. Cys-31 and Cys-58 are oxidised to a cystine. Residues Asp-75 to Val-300 form an Approximate repeat. 3 N-linked (GlcNAc...) asparagine glycosylation sites follow: Asn-128, Asn-175, and Asn-196. 13 disulfides stabilise this stretch: Cys-157-Cys-187, Cys-190-Cys-199, Cys-194-Cys-207, Cys-215-Cys-223, Cys-219-Cys-231, Cys-232-Cys-240, Cys-236-Cys-248, Cys-251-Cys-260, Cys-264-Cys-291, Cys-295-Cys-307, Cys-311-Cys-326, Cys-329-Cys-333, and Cys-337-Cys-362. Position 229 is a phosphoserine (Ser-229). N-linked (GlcNAc...) asparagine glycans are attached at residues Asn-352, Asn-361, Asn-413, and Asn-444. One copy of the Approximate repeat lies at Gln-390–Met-600. 11 disulfide bridges follow: Cys-470/Cys-499, Cys-506/Cys-515, Cys-510/Cys-523, Cys-526/Cys-535, Cys-539/Cys-555, Cys-558/Cys-571, Cys-562/Cys-579, Cys-582/Cys-591, Cys-595/Cys-617, Cys-620/Cys-628, and Cys-624/Cys-636. Asn-528 carries an N-linked (GlcNAc...) asparagine glycan. N-linked (GlcNAc...) asparagine glycosylation occurs at Asn-568. A glycan (N-linked (GlcNAc...) asparagine) is linked at Asn-603. The helical transmembrane segment at Ile-646–Met-668 threads the bilayer. The Cytoplasmic segment spans residues Arg-669–Ala-1210. At Thr-678 the chain carries Phosphothreonine; by PKC and PKD/PRKD1. Positions Leu-688 to Leu-704 are important for dimerization, phosphorylation and activation. Phosphothreonine; by PKD/PRKD1 is present on Thr-693. The residue at position 695 (Ser-695) is a Phosphoserine. In terms of domain architecture, Protein kinase spans Phe-712–Leu-979. A Glycyl lysine isopeptide (Lys-Gly) (interchain with G-Cter in ubiquitin) cross-link involves residue Lys-716. Residue Leu-718–Val-726 coordinates ATP. Lys-737 is covalently cross-linked (Glycyl lysine isopeptide (Lys-Gly) (interchain with G-Cter in ubiquitin)). Residue Lys-745 coordinates ATP. At Lys-745 the chain carries N6-(2-hydroxyisobutyryl)lysine. Glycyl lysine isopeptide (Lys-Gly) (interchain with G-Cter in ubiquitin) cross-links involve residues Lys-754 and Lys-757. Position 790–791 (Thr-790–Gln-791) interacts with ATP. Asp-837 functions as the Proton acceptor in the catalytic mechanism. Asp-855 contacts ATP. Lys-867 participates in a covalent cross-link: Glycyl lysine isopeptide (Lys-Gly) (interchain with G-Cter in ubiquitin). Tyr-869 carries the phosphotyrosine modification. Glycyl lysine isopeptide (Lys-Gly) (interchain with G-Cter in ubiquitin) cross-links involve residues Lys-929, Lys-960, and Lys-970. A phosphoserine mark is found at Ser-991 and Ser-995. A phosphotyrosine; by autocatalysis mark is found at Tyr-998 and Tyr-1016. Phosphoserine occurs at positions 1026 and 1039. Thr-1041 carries the phosphothreonine modification. A Phosphoserine modification is found at Ser-1042. Cys-1049 carries S-palmitoyl cysteine lipidation. Residue Ser-1064 is modified to Phosphoserine. Phosphotyrosine is present on Tyr-1069. Phosphoserine occurs at positions 1070, 1071, and 1081. A phosphotyrosine; by autocatalysis mark is found at Tyr-1092 and Tyr-1110. The disordered stretch occupies residues Val-1097–Glu-1137. Composition is skewed to polar residues over residues Ser-1104–Leu-1115 and Pro-1128–Glu-1137. Cys-1146 carries S-palmitoyl cysteine lipidation. Ser-1166 carries the post-translational modification Phosphoserine. Residues Tyr-1172 and Tyr-1197 each carry the phosphotyrosine; by autocatalysis modification. The residue at position 1199 (Arg-1199) is an Omega-N-methylarginine.

It belongs to the protein kinase superfamily. Tyr protein kinase family. EGF receptor subfamily. Binding of the ligand triggers homo- and/or heterodimerization of the receptor triggering its autophosphorylation. Heterodimer with ERBB2. Forms a complex with CCDC88A/GIV (via SH2-like regions) and GNAI3 which leads to enhanced EGFR signaling and triggering of cell migration; binding to CCDC88A requires autophosphorylation of the EGFR C-terminal region, and ligand stimulation is required for recruitment of GNAI3 to the complex. Interacts with ERRFI1; inhibits dimerization of the kinase domain and autophosphorylation. Part of a complex with ERBB2 and either PIK3C2A or PIK3C2B. Interacts with GRB2; an adapter protein coupling the receptor to downstream signaling pathways. Interacts with GAB2; involved in signaling downstream of EGFR. Interacts with STAT3; mediates EGFR downstream signaling in cell proliferation. Interacts with RIPK1; involved in NF-kappa-B activation. Interacts (autophosphorylated) with CBL, CBLB and CBLC; involved in EGFR ubiquitination and regulation; interaction with CBL is reduced in the presence of tensin TNS4. Interacts with SOCS5; regulates EGFR degradation through ELOC- and ELOB-mediated ubiquitination and proteasomal degradation. Interacts with PRMT5; methylates EGFR and enhances interaction with PTPN6. Interacts (phosphorylated) with PTPN6; inhibits EGFR-dependent activation of MAPK/ERK. Interacts with COPG1; essential for regulation of EGF-dependent nuclear transport of EGFR by retrograde trafficking from the Golgi to the ER. Interacts with TNK2; this interaction is dependent on EGF stimulation and kinase activity of EGFR. Interacts with PCNA; positively regulates PCNA. Interacts with PELP1. Interacts with MUC1. Interacts with AP2M1. Interacts with FER. May interact with EPS8; mediates EPS8 phosphorylation. Interacts (via SH2 domains) with GRB2, NCK1 and NCK2. Interacts with ATXN2. Interacts with GAREM1. Interacts (ubiquitinated) with ANKRD13A/B/D; the interaction is direct and may regulate EGFR internalization after EGF stimulation. Interacts with GPER1; the interaction occurs in an estrogen-dependent manner. Interacts (via C-terminal cytoplasmic kinase domain) with ZPR1 (via zinc fingers). Interacts with RNF115 and RNF126. Interacts with GPRC5A (via its transmembrane domain). Interacts with FAM83B; positively regulates EGFR inducing its autophosphorylation in absence of stimulation by EGF. Interacts with LAPTM4B; positively correlates with EGFR activation. Interacts with STX19. Interacts with CD44. Interacts with PGRMC1; the interaction requires PGRMC1 homodimerization. Interacts with PIKFYVE. Interacts with NEU3. Interacts with TRAF4. Interacts with the ant venom OMEGA-myrmeciitoxin(02)-Mg1a. Interacts with CD82; this interaction facilitates ligand-induced endocytosis of the receptor and its subsequent desensitization. Phosphorylated on Tyr residues in response to EGF. Phosphorylation at Ser-695 is partial and occurs only if Thr-693 is phosphorylated. Phosphorylation at Thr-678 and Thr-693 by PRKD1 inhibits EGF-induced MAPK8/JNK1 activation. Dephosphorylation by PTPRJ prevents endocytosis and stabilizes the receptor at the plasma membrane. Autophosphorylation at Tyr-1197 is stimulated by methylation at Arg-1199 and enhances interaction with PTPN6. Autophosphorylation at Tyr-1092 and/or Tyr-1110 recruits STAT3. Dephosphorylated by PTPN1 and PTPN2. Post-translationally, monoubiquitinated and polyubiquitinated upon EGF stimulation; which does not affect tyrosine kinase activity or signaling capacity but may play a role in lysosomal targeting. Polyubiquitin linkage is mainly through 'Lys-63', but linkage through 'Lys-48', 'Lys-11' and 'Lys-29' also occurs. Deubiquitination by OTUD7B prevents degradation. Ubiquitinated by RNF115 and RNF126. Ubiquitinated by ZNRF1 or CBL at different lysines in response to EGF stimulation; leading to recruitment of the ESCRT machinery and subsequent degradation in the lysosomes. Deubiquitinated by UCHL1 leading to the inhibition of its degradation. In terms of processing, palmitoylated on Cys residues by ZDHHC20. Palmitoylation inhibits internalization after ligand binding, and increases the persistence of tyrosine-phosphorylated EGFR at the cell membrane. Palmitoylation increases the amplitude and duration of EGFR signaling. Methylated. Methylation at Arg-1199 by PRMT5 stimulates phosphorylation at Tyr-1197. As to expression, hypothalamus.

Its subcellular location is the cell membrane. It is found in the endoplasmic reticulum membrane. The protein resides in the golgi apparatus membrane. The protein localises to the nucleus membrane. It localises to the endosome. Its subcellular location is the endosome membrane. It is found in the nucleus. The catalysed reaction is L-tyrosyl-[protein] + ATP = O-phospho-L-tyrosyl-[protein] + ADP + H(+). With respect to regulation, endocytosis and inhibition of the activated EGFR by phosphatases like PTPRJ and PTPRK constitute immediate regulatory mechanisms. Upon EGF-binding phosphorylates EPS15 that regulates EGFR endocytosis and activity. Moreover, inducible feedback inhibitors including LRIG1, SOCS4, SOCS5 and ERRFI1 constitute alternative regulatory mechanisms for the EGFR signaling. Its function is as follows. Receptor tyrosine kinase binding ligands of the EGF family and activating several signaling cascades to convert extracellular cues into appropriate cellular responses. Known ligands include EGF, TGFA/TGF-alpha, AREG, epigen/EPGN, BTC/betacellulin, epiregulin/EREG and HBEGF/heparin-binding EGF. Ligand binding triggers receptor homo- and/or heterodimerization and autophosphorylation on key cytoplasmic residues. The phosphorylated receptor recruits adapter proteins like GRB2 which in turn activates complex downstream signaling cascades. Activates at least 4 major downstream signaling cascades including the RAS-RAF-MEK-ERK, PI3 kinase-AKT, PLCgamma-PKC and STATs modules. May also activate the NF-kappa-B signaling cascade. Also directly phosphorylates other proteins like RGS16, activating its GTPase activity and probably coupling the EGF receptor signaling to the G protein-coupled receptor signaling. Also phosphorylates MUC1 and increases its interaction with SRC and CTNNB1/beta-catenin. Positively regulates cell migration via interaction with CCDC88A/GIV which retains EGFR at the cell membrane following ligand stimulation, promoting EGFR signaling which triggers cell migration. Plays a role in enhancing learning and memory performance. Plays a role in mammalian pain signaling (long-lasting hypersensitivity). This Macaca mulatta (Rhesus macaque) protein is Epidermal growth factor receptor (EGFR).